The following is a 658-amino-acid chain: Carnitine O-palmitoyltransferase 2, mitochondrial (658 aa).

Residues 1–26 (MARLLTSSSALRWGAVSSSQSVGRAY) constitute a mitochondrion transit peptide. Residues 27–179 (SSGSPDTEYV…GYLEPEIFHL (153 aa)) are Mitochondrial matrix-facing. Positions 180–209 (NPAKSDTLTFRKLIRFVPSSLSWYGAYMVN) form an intramembrane region, note=Mitochondrial inner membrane. Residues 210–658 (AYPLDMSQYF…FTVLQDKPIK (449 aa)) are Mitochondrial matrix-facing. His373 acts as the Proton acceptor in catalysis. Residue 453–465 (GKELLKTQKLSPD) participates in CoA binding. (R)-carnitine-binding residues include Tyr487, Ser489, and Thr500.

It belongs to the carnitine/choline acetyltransferase family.

The protein localises to the mitochondrion inner membrane. It carries out the reaction (R)-carnitine + hexadecanoyl-CoA = O-hexadecanoyl-(R)-carnitine + CoA. It catalyses the reaction octanoyl-CoA + (R)-carnitine = O-octanoyl-(R)-carnitine + CoA. The enzyme catalyses decanoyl-CoA + (R)-carnitine = O-decanoyl-(R)-carnitine + CoA. The catalysed reaction is dodecanoyl-CoA + (R)-carnitine = O-dodecanoyl-R-carnitine + CoA. It carries out the reaction tetradecanoyl-CoA + (R)-carnitine = O-tetradecanoyl-(R)-carnitine + CoA. It catalyses the reaction (R)-carnitine + octadecanoyl-CoA = O-octadecanoyl-(R)-carnitine + CoA. The enzyme catalyses eicosanoyl-CoA + (R)-carnitine = O-eicosanoyl-(R)-carnitine + CoA. The catalysed reaction is (9Z)-tetradecenoyl-CoA + (R)-carnitine = O-(9Z)-tetradecenoyl-(R)-carnitine + CoA. It carries out the reaction (5Z)-tetradecenoyl-CoA + (R)-carnitine = O-(5Z)-tetradecenoyl-(R)-carnitine + CoA. It catalyses the reaction (R)-carnitine + (9Z)-octadecenoyl-CoA = O-(9Z)-octadecenoyl-(R)-carnitine + CoA. The enzyme catalyses 4,8-dimethylnonanoyl-CoA + (R)-carnitine = O-4,8-dimethylnonanoyl-(R)-carnitine + CoA. The protein operates within lipid metabolism; fatty acid beta-oxidation. Involved in the intramitochondrial synthesis of acylcarnitines from accumulated acyl-CoA metabolites. Reconverts acylcarnitines back into the respective acyl-CoA esters that can then undergo beta-oxidation, an essential step for the mitochondrial uptake of long-chain fatty acids and their subsequent beta-oxidation in the mitochondrion. Active with medium (C8-C12) and long-chain (C14-C18) acyl-CoA esters. This chain is Carnitine O-palmitoyltransferase 2, mitochondrial (cpt2), found in Xenopus tropicalis (Western clawed frog).